Reading from the N-terminus, the 590-residue chain is Vesicular glutamate transporter 3 (590 aa).

Residues 1 to 76 (MPLGGFAGLK…CGCFGLPKRY (76 aa)) are Cytoplasmic-facing. A helical transmembrane segment spans residues 77-97 (IIAMLSGLGFCISFGIRCNLG). Topologically, residues 98–130 (VAIVEMVNNNTVYINGTAVMQPAQFNWDPETVG) are vesicular. 2 N-linked (GlcNAc...) asparagine glycosylation sites follow: Asn106 and Asn112. The chain crosses the membrane as a helical span at residues 131–151 (LIHGSFFWGYIVTQIPGGFIS). At 152 to 153 (NK) the chain is on the cytoplasmic side. The chain crosses the membrane as a helical span at residues 154–174 (LAANRVFGAAIFLTSVLNMFI). Topologically, residues 175–182 (PSAARVHY) are vesicular. A helical membrane pass occupies residues 183–203 (GCVMFVRILQGLVEGVTYPAC). At 204–221 (HGMWSKWAPPLERSRLAT) the chain is on the cytoplasmic side. A helical membrane pass occupies residues 222-242 (TSFCGSYAGAVIAMPLAGILV). The Vesicular portion of the chain corresponds to 243-249 (QYVGWPS). Residues 250-270 (VFYIYGVFGIIWYIFWILLAY) form a helical membrane-spanning segment. Over 271–315 (NSPAVHPTISEEERNYIETSIGEGANLMSSTEKFKTPWREFFTSM) the chain is Cytoplasmic. Residues 316–336 (PVYAIIVANFCRSWTFYLLLI) form a helical membrane-spanning segment. The Vesicular portion of the chain corresponds to 337–354 (SQPAYFEEVFGFPISKVG). A helical membrane pass occupies residues 355–375 (ILSAVPHMVMTIIVPIGGQLA). Over 376-391 (DFLRSRKILSTTTVRK) the chain is Cytoplasmic. A helical transmembrane segment spans residues 392–412 (IMNCGGFGMEATLLLVVGFSH). Residues 413-414 (TR) are Vesicular-facing. Residues 415–435 (AVAISFLILAVGFSGFAISGF) traverse the membrane as a helical segment. Residues 436-448 (NVNHLDIAPRYAS) are Cytoplasmic-facing. Residues 449-469 (ILMGISNGVGTLSGMVCPLIV) form a helical membrane-spanning segment. Residues 470 to 482 (GALTKHKTRLEWQ) lie on the Vesicular side of the membrane. The helical transmembrane segment at 483-503 (HVFVIASMVHYTGVIFYAIFA) threads the bilayer. Topologically, residues 504–587 (SGEKQDWADP…NHYENGEYQT (84 aa)) are cytoplasmic. Residues 526-535 (EDELADETEP) show a composition bias toward acidic residues. Residues 526–590 (EDELADETEP…ENGEYQTQYQ (65 aa)) are disordered. The span at 536 to 557 (SSDSGLATRQKTYGTTDNSSGR) shows a compositional bias: polar residues.

The protein belongs to the major facilitator superfamily. Sodium/anion cotransporter family. VGLUT subfamily.

The protein resides in the cytoplasmic vesicle. Its subcellular location is the secretory vesicle. The protein localises to the synaptic vesicle membrane. It is found in the cell membrane. It localises to the synapse. The protein resides in the synaptosome. It catalyses the reaction L-glutamate(out) = L-glutamate(in). It carries out the reaction 3 Na(+)(out) + phosphate(out) = 3 Na(+)(in) + phosphate(in). The enzyme catalyses chloride(in) = chloride(out). The L-glutamate uniporter activity exhibits a biphasic dependence on chloride concentration. Chloride channel activity is allosterically activated by lumenal H(+) and Cl(-) leading to synaptic vesicles acidification. The glutamate transport activity is allosterically activated by lumenal H(+) and Cl(-), preventing non-vesicular L-glutamate release. Functionally, multifunctional transporter that transports L-glutamate as well as multiple ions such as chloride, sodium and phosphate. At the synaptic vesicle membrane, mainly functions as an uniporter that mediates the uptake of L-glutamate into synaptic vesicles at presynaptic nerve terminals of excitatory neural cells. The L-glutamate uniporter activity is electrogenic and is driven by the proton electrochemical gradient, mainly by the electrical gradient established by the vacuolar H(+)-ATPase across the synaptic vesicle membrane. In addition, functions as a chloride channel that allows a chloride permeation through the synaptic vesicle membrane that affects the proton electrochemical gradient and promotes synaptic vesicles acidification. At the plasma membrane, following exocytosis, functions as a symporter of Na(+) and phosphate from the extracellular space to the cytoplasm allowing synaptic phosphate homeostasis regulation. The symporter activity is electrogenic. Moreover, operates synergistically with SLC18A3/VACHT under a constant H(+) gradient, thereby allowing striatal vesicular acetylcholine uptake. In Danio rerio (Zebrafish), this protein is Vesicular glutamate transporter 3.